A 242-amino-acid polypeptide reads, in one-letter code: Mediator of RNA polymerase II transcription subunit 19-A (242 aa).

Positions 1–15 are enriched in polar residues; that stretch reads MTEIFSTLFGQNDAQ. Disordered stretches follow at residues 1–33 and 171–242; these read MTEI…PPPS and PPKK…NSLR. Over residues 171–184 the composition is skewed to basic residues; sequence PPKKKSKHKHRHHH. Positions 193 to 210 are enriched in basic and acidic residues; it reads TRTDPTKKKKKKDNEPER. Residues 211–223 are compositionally biased toward basic residues; that stretch reads RKKKKDKKKKKNR. Positions 232 to 242 are enriched in polar residues; it reads TGSQPNSNSLR.

The protein belongs to the Mediator complex subunit 19 family. Component of the Mediator complex.

The protein resides in the nucleus. In terms of biological role, component of the Mediator complex, a coactivator involved in the regulated transcription of nearly all RNA polymerase II-dependent genes. Mediator functions as a bridge to convey information from gene-specific regulatory proteins to the basal RNA polymerase II transcription machinery. Mediator is recruited to promoters by direct interactions with regulatory proteins and serves as a scaffold for the assembly of a functional preinitiation complex with RNA polymerase II and the general transcription factors. In Danio rerio (Zebrafish), this protein is Mediator of RNA polymerase II transcription subunit 19-A (med19a).